The sequence spans 420 residues: Glucose-1-phosphate adenylyltransferase (420 aa).

Residues Y107, G172, 187 to 188 (EK), and S205 each bind alpha-D-glucose 1-phosphate.

Belongs to the bacterial/plant glucose-1-phosphate adenylyltransferase family. As to quaternary structure, homotetramer.

It catalyses the reaction alpha-D-glucose 1-phosphate + ATP + H(+) = ADP-alpha-D-glucose + diphosphate. It participates in glycan biosynthesis; glycogen biosynthesis. In terms of biological role, involved in the biosynthesis of ADP-glucose, a building block required for the elongation reactions to produce glycogen. Catalyzes the reaction between ATP and alpha-D-glucose 1-phosphate (G1P) to produce pyrophosphate and ADP-Glc. The chain is Glucose-1-phosphate adenylyltransferase from Rhizobium johnstonii (strain DSM 114642 / LMG 32736 / 3841) (Rhizobium leguminosarum bv. viciae).